Reading from the N-terminus, the 136-residue chain is MADDKKSVKKEKKVKKKEKKIVPRGKVYITASFNNTIVTITDMAGNTISWSTSGAMGFRGSKKSTPYAAQIAAGNAAEKAMDSAGLQEVDVMVSGPGIGRESAIRSLVARGLNIKMIKDVTPLPHNGCRPRKRRRV.

It belongs to the universal ribosomal protein uS11 family. In terms of assembly, part of the 30S ribosomal subunit. Interacts with proteins S7 and S18. Binds to IF-3.

Functionally, located on the platform of the 30S subunit, it bridges several disparate RNA helices of the 16S rRNA. Forms part of the Shine-Dalgarno cleft in the 70S ribosome. The sequence is that of Small ribosomal subunit protein uS11 from Leptospira borgpetersenii serovar Hardjo-bovis (strain JB197).